A 326-amino-acid polypeptide reads, in one-letter code: Triacylglycerol lipase 2 (326 aa).

The (A/G)XSXG lipase motif signature appears at 142-146 (AHSMG).

As to quaternary structure, interacts with MIA40; forms mixed disulfide intermediates with MIA40.

The protein resides in the mitochondrion. Its subcellular location is the mitochondrion intermembrane space. It catalyses the reaction a triacylglycerol + H2O = a diacylglycerol + a fatty acid + H(+). It carries out the reaction 1,2,3-tri-(9Z-octadecenoyl)-glycerol + H2O = di-(9Z)-octadecenoylglycerol + (9Z)-octadecenoate + H(+). The catalysed reaction is 1,2,3-tributanoylglycerol + H2O = dibutanoylglycerol + butanoate + H(+). The enzyme catalyses 1,2,3-trioctanoylglycerol + H2O = dioctanoylglycerol + octanoate + H(+). It catalyses the reaction di-(9Z)-octadecenoylglycerol + H2O = (9Z-octadecenoyl)-glycerol + (9Z)-octadecenoate + H(+). It carries out the reaction dioctanoylglycerol + H2O = octanoylglycerol + octanoate + H(+). In terms of biological role, mitochondrial triacylglycerol (TAG) lipase with activity toward long-chain diacylglycerols (DAGs) and triacylglycerols (TAGs). Involved in mitochondrial lipid metabolism. This chain is Triacylglycerol lipase 2 (TGL2), found in Saccharomyces cerevisiae (strain ATCC 204508 / S288c) (Baker's yeast).